The following is a 206-amino-acid chain: Methylthioribulose-1-phosphate dehydratase (206 aa).

Zn(2+) is bound by residues His-96 and His-98.

This sequence belongs to the aldolase class II family. MtnB subfamily. Zn(2+) serves as cofactor.

It carries out the reaction 5-(methylsulfanyl)-D-ribulose 1-phosphate = 5-methylsulfanyl-2,3-dioxopentyl phosphate + H2O. It functions in the pathway amino-acid biosynthesis; L-methionine biosynthesis via salvage pathway; L-methionine from S-methyl-5-thio-alpha-D-ribose 1-phosphate: step 2/6. Its function is as follows. Catalyzes the dehydration of methylthioribulose-1-phosphate (MTRu-1-P) into 2,3-diketo-5-methylthiopentyl-1-phosphate (DK-MTP-1-P). The sequence is that of Methylthioribulose-1-phosphate dehydratase from Exiguobacterium sibiricum (strain DSM 17290 / CCUG 55495 / CIP 109462 / JCM 13490 / 255-15).